Consider the following 312-residue polypeptide: Tetraspanin-17 (312 aa).

Helical transmembrane passes span 17 to 37 (IFSI…LWML), 64 to 84 (VSLV…CGAV), 89 to 109 (FLLL…VAMG), and 274 to 294 (IWIF…GICL).

This sequence belongs to the tetraspanin (TM4SF) family. Expressed in dopaminergic neurons, head muscles, vulva and spermatheca.

It is found in the cell membrane. The protein resides in the cell projection. The protein localises to the dendrite. It localises to the axon. Protects dopaminergic neurons against oxidative stress-induced neurodegeneration. May act partly via dopamine receptor dop-2 to negatively regulate dopamine reuptake transporter dat-1 activity. Also plays a role in modulating behaviors linked to dopamine signaling. Confers protection against oxidative stress in the whole body. In Caenorhabditis elegans, this protein is Tetraspanin-17.